The chain runs to 269 residues: 3-methyl-2-oxobutanoate hydroxymethyltransferase (269 aa).

Aspartate 43 and aspartate 82 together coordinate Mg(2+). Residues aspartate 43 to serine 44, aspartate 82, and lysine 110 each bind 3-methyl-2-oxobutanoate. Mg(2+) is bound at residue glutamate 112. The Proton acceptor role is filled by glutamate 179.

It belongs to the PanB family. In terms of assembly, homodecamer; pentamer of dimers. Mg(2+) serves as cofactor.

It localises to the cytoplasm. It catalyses the reaction 3-methyl-2-oxobutanoate + (6R)-5,10-methylene-5,6,7,8-tetrahydrofolate + H2O = 2-dehydropantoate + (6S)-5,6,7,8-tetrahydrofolate. It functions in the pathway cofactor biosynthesis; (R)-pantothenate biosynthesis; (R)-pantoate from 3-methyl-2-oxobutanoate: step 1/2. In terms of biological role, catalyzes the reversible reaction in which hydroxymethyl group from 5,10-methylenetetrahydrofolate is transferred onto alpha-ketoisovalerate to form ketopantoate. This is 3-methyl-2-oxobutanoate hydroxymethyltransferase from Acinetobacter baumannii (strain SDF).